The sequence spans 117 residues: UPF0122 protein Dred_2057 (117 aa).

Belongs to the UPF0122 family.

Might take part in the signal recognition particle (SRP) pathway. This is inferred from the conservation of its genetic proximity to ftsY/ffh. May be a regulatory protein. The polypeptide is UPF0122 protein Dred_2057 (Desulforamulus reducens (strain ATCC BAA-1160 / DSM 100696 / MI-1) (Desulfotomaculum reducens)).